The primary structure comprises 203 residues: MPPMTRKTRIQPIEPVAEEDDNGYDRPSKSQLKREMHELQVLGQALVDLPKDALKRMPMPESLGDAVREARRITDHEGKRRQLQYVGRVMRSLTDDETAALRTALDAQRGVNKAATARLHWIERTREQLLASDDALTEFLRQHPDADIQEGRTLIRNARKEAQQGKPPRYFRELFQWIKAAGGASDSDDEAADDAGDDHDDEA.

Disordered stretches follow at residues 1-31 (MPPMTRKTRIQPIEPVAEEDDNGYDRPSKSQ) and 182-203 (GGASDSDDEAADDAGDDHDDEA). A compositionally biased stretch (acidic residues) spans 186–203 (DSDDEAADDAGDDHDDEA).

This sequence belongs to the DarP family.

The protein resides in the cytoplasm. Its function is as follows. Member of a network of 50S ribosomal subunit biogenesis factors which assembles along the 30S-50S interface, preventing incorrect 23S rRNA structures from forming. Promotes peptidyl transferase center (PTC) maturation. The chain is Dual-action ribosomal maturation protein DarP from Burkholderia cenocepacia (strain HI2424).